Consider the following 328-residue polypeptide: Apoptosis facilitator Bcl-2-like protein 14 (328 aa).

Position 44 is a phosphoserine (S44). The BH3 signature appears at 213-227; that stretch reads IVELLKFSGDQLGRE. The BH2 motif lies at 309-316; sequence WVQQNGGW.

The protein belongs to the Bcl-2 family. Phosphorylated by MELK, leading to inhibit its pro-apoptotic function.

The protein localises to the cytoplasm. Its function is as follows. Plays a role in apoptosis. The chain is Apoptosis facilitator Bcl-2-like protein 14 (Bcl2l14) from Mus musculus (Mouse).